The chain runs to 311 residues: Cytosolic Fe-S cluster assembly factor Nubp1 homolog (311 aa).

The tract at residues 1-20 (MQAPPPEHCPGVESENAGKG) is disordered. Positions 9, 23, 26, and 32 each coordinate [4Fe-4S] cluster. ATP is bound at residue 63–70 (GKGGVGKS). [4Fe-4S] cluster-binding residues include Cys-240 and Cys-243.

This sequence belongs to the Mrp/NBP35 ATP-binding proteins family. NUBP1/NBP35 subfamily. Heterotetramer of 2 Nubp1 and 2 Nubp2 chains. [4Fe-4S] cluster is required as a cofactor.

It localises to the cytoplasm. Component of the cytosolic iron-sulfur (Fe/S) protein assembly (CIA) machinery. Required for maturation of extramitochondrial Fe-S proteins. The Nubp1-Nubp2 heterotetramer forms a Fe-S scaffold complex, mediating the de novo assembly of an Fe-S cluster and its transfer to target apoproteins. The chain is Cytosolic Fe-S cluster assembly factor Nubp1 homolog from Drosophila simulans (Fruit fly).